A 352-amino-acid chain; its full sequence is Probable RNA methyltransferase CV_2253 (352 aa).

The active-site Proton acceptor is E91. In terms of domain architecture, Radical SAM core spans 94-320; the sequence is LLPRDGLCVS…TKVRDSAGQD (227 aa). C101 and C325 form a disulfide bridge. Residues C108, C112, and C115 each coordinate [4Fe-4S] cluster. S-adenosyl-L-methionine is bound by residues 153-154, S183, 206-208, and N282; these read GE and SLH. C325 acts as the S-methylcysteine intermediate in catalysis.

This sequence belongs to the radical SAM superfamily. RlmN family. The cofactor is [4Fe-4S] cluster.

It localises to the cytoplasm. This chain is Probable RNA methyltransferase CV_2253, found in Chromobacterium violaceum (strain ATCC 12472 / DSM 30191 / JCM 1249 / CCUG 213 / NBRC 12614 / NCIMB 9131 / NCTC 9757 / MK).